A 196-amino-acid polypeptide reads, in one-letter code: Regulator of G-protein signaling 1 (196 aa).

Residues 1–27 (MPGMFFSANPKDLKGTDQSLLDDKTQK) form a disordered region. A compositionally biased stretch (basic and acidic residues) spans 11-25 (KDLKGTDQSLLDDKT). One can recognise an RGS domain in the interval 72–187 (SLEKLLANQT…LKSNIYLNLL (116 aa)).

In terms of assembly, interacts with GNAI1 and GNAQ.

The protein resides in the cell membrane. It localises to the cytoplasm. The protein localises to the cytosol. Regulates G protein-coupled receptor signaling cascades, including signaling downstream of the N-formylpeptide chemoattractant receptors and leukotriene receptors. Inhibits B cell chemotaxis toward CXCL12. Inhibits signal transduction by increasing the GTPase activity of G protein alpha subunits, thereby driving them into their inactive GDP-bound form. In Equus caballus (Horse), this protein is Regulator of G-protein signaling 1 (RGS1).